Consider the following 151-residue polypeptide: Small ribosomal subunit protein bS6 (151 aa).

The tract at residues E97–N151 is disordered. Residues Q105–N151 are compositionally biased toward basic and acidic residues.

The protein belongs to the bacterial ribosomal protein bS6 family.

Its function is as follows. Binds together with bS18 to 16S ribosomal RNA. This Methylorubrum extorquens (strain CM4 / NCIMB 13688) (Methylobacterium extorquens) protein is Small ribosomal subunit protein bS6.